Consider the following 366-residue polypeptide: Transmembrane protein 25 (366 aa).

The signal sequence occupies residues 1–26 (MALPPGPAALRHTLLLLPALLSSGWG). The Extracellular portion of the chain corresponds to 27–232 (ELEPQIDGQT…APGLLATRVE (206 aa)). Residues 30-123 (PQIDGQTWAE…SGRSANASVI (94 aa)) enclose the Ig-like domain. A disulfide bridge connects residues Cys52 and Cys107. Asn106, Asn162, Asn175, Asn192, and Asn205 each carry an N-linked (GlcNAc...) asparagine glycan. The chain crosses the membrane as a helical span at residues 233-253 (VPLLGIVVAAGLALGTLVGFS). The Cytoplasmic segment spans residues 254–366 (TLVACLVCRK…SSVSSDEIWL (113 aa)). Residues 299-308 (PSNLQLNDLT) show a composition bias toward polar residues. The tract at residues 299–335 (PSNLQLNDLTPDSRAVKPADRQMAQNNSRPELLDPEP) is disordered.

In terms of assembly, interacts with GRIN2B. Expressed throughout the brain with higher levels in the pyramidal cell layer of the hippocampal CA1 and CA3 regions. Also highly expressed within the hippocampal dentate gyrus region and cerebellum and in scattered neurons in the cerebral cortex.

It is found in the cell membrane. The protein localises to the secreted. The protein resides in the late endosome. Its subcellular location is the lysosome. In terms of biological role, in neurons, modulates the degradation of NMDA receptor GRIN2B subunit. Plays a role in the regulation of neuronal excitability. The sequence is that of Transmembrane protein 25 (TMEM25) from Homo sapiens (Human).